A 276-amino-acid chain; its full sequence is NADPH-dependent 7-cyano-7-deazaguanine reductase (276 aa).

Residue 80–82 coordinates substrate; sequence IES. 82-83 serves as a coordination point for NADPH; the sequence is SK. Cys178 acts as the Thioimide intermediate in catalysis. Catalysis depends on Asp185, which acts as the Proton donor. Substrate is bound at residue 217 to 218; that stretch reads HE. 246-247 lines the NADPH pocket; it reads RG.

The protein belongs to the GTP cyclohydrolase I family. QueF type 2 subfamily. As to quaternary structure, homodimer.

The protein localises to the cytoplasm. The enzyme catalyses 7-aminomethyl-7-carbaguanine + 2 NADP(+) = 7-cyano-7-deazaguanine + 2 NADPH + 3 H(+). It participates in tRNA modification; tRNA-queuosine biosynthesis. In terms of biological role, catalyzes the NADPH-dependent reduction of 7-cyano-7-deazaguanine (preQ0) to 7-aminomethyl-7-deazaguanine (preQ1). The sequence is that of NADPH-dependent 7-cyano-7-deazaguanine reductase from Teredinibacter turnerae (strain ATCC 39867 / T7901).